A 313-amino-acid polypeptide reads, in one-letter code: Olfactory receptor 56A4 (313 aa).

Residues 1-28 (MASPSNDSTAPVSEFLLICFPNFQSWQH) are Extracellular-facing. Asparagine 6 carries an N-linked (GlcNAc...) asparagine glycan. A helical membrane pass occupies residues 29 to 49 (WLSLPLSLLFLLAMGANTTLL). The Cytoplasmic portion of the chain corresponds to 50–57 (ITIQLEAS). Residues 58-78 (LHQPLYYLLSLLSLLDIVLCL) form a helical membrane-spanning segment. At 79 to 102 (TVIPKVLAIFWFDLRSISFPACFL) the chain is on the extracellular side. Cysteines 100 and 192 form a disulfide. A helical transmembrane segment spans residues 103 to 123 (QMFIMNSFLTMESCTFMVMAY). At 124–142 (DRYVAICHPLRYPSIITDQ) the chain is on the cytoplasmic side. A helical transmembrane segment spans residues 143–163 (FVARAVVFVIARNAFVSLPVP). The Extracellular segment spans residues 164–199 (MLSARLRYCAGNIIKNCICSNLSVSKLSCDDITFNQ). N-linked (GlcNAc...) asparagine glycosylation occurs at asparagine 184. Residues 200 to 220 (LYQFVAGWTLLGSDLILIVIS) traverse the membrane as a helical segment. At 221-240 (YSFILKVVLRIKAEGAVAKA) the chain is on the cytoplasmic side. The chain crosses the membrane as a helical span at residues 241 to 261 (LSTCGSHFILILFFSTVLLVL). Residues 262–276 (VITNLARKRIPPDVP) are Extracellular-facing. A helical membrane pass occupies residues 277–297 (ILLNILHHLIPPALNPIVYGV). The Cytoplasmic segment spans residues 298 to 313 (RTKEIKQGIQNLLKRL).

This sequence belongs to the G-protein coupled receptor 1 family.

Its subcellular location is the cell membrane. Odorant receptor. The polypeptide is Olfactory receptor 56A4 (OR56A4) (Homo sapiens (Human)).